The sequence spans 151 residues: Prefoldin subunit 5 (151 aa).

Residues 15-35 (IDQLKALKEQADLEVNLLQDS) are a coiled coil.

Belongs to the prefoldin subunit alpha family. In terms of assembly, heterohexamer of two PFD-alpha type and four PFD-beta type subunits forming prefoldin co-chaperone complex. Interacts with PFD6. Binds to the DELLA protein GAI.

It localises to the cytoplasm. It is found in the nucleus. Functionally, binds specifically to cytosolic chaperonin (c-CPN) and transfers target proteins to it. Binds to nascent polypeptide chain and promotes folding in an environment in which there are many competing pathways for nonnative proteins. Together with other chaperonins, contribute to the regulation of gene expression by modulating the spliceosome function on pre-mRNA splicing post-transcriptionally by acting as a co-chaperone of Hsp90 to control levels of LSM8. Required for the biogenesis of tubulins and for subsequent microtubules (MTs) organization and dynamicity. Necessary for tolerance to NaCl salt stress. Involved in the process leading to microtubules dissociation in response to gibberellic acid (GA) probably due to the DELLA proteins-mediated translocation of the prefoldin co-chaperone complex from the cytoplasm to the nucleus. Prevents cold acclimation (e.g. 7 days at 4 degrees Celsius) in a DELLA proteins-dependent manner by promoting nuclear proteasome-mediated HY5 degradation, thus modulating the expression of several genes and reducing anthocyanin biosynthesis, but seems not involved in constitutive freezing tolerance. Contributes to the GA-dependent regulation of PIN2 trafficking at the plasma membrane, thus influencing auxin flux. This Arabidopsis thaliana (Mouse-ear cress) protein is Prefoldin subunit 5.